A 347-amino-acid polypeptide reads, in one-letter code: NADH-ubiquinone oxidoreductase chain 2 (347 aa).

The next 10 membrane-spanning stretches (helical) occupy residues 13–33, 55–75, 96–116, 123–143, 149–169, 178–198, 201–221, 247–267, 274–294, and 326–346; these read IFAGTFITVLSSHWFFTWVGL, AAIKYFLTQATASMILLMAIL, LMIMTAMAMKLGMAPFHFWVP, PLMSGLLLLTWQKLAPISIMY, LNVNLLLTLSILSIMAGSWGG, ILAYSSITHMGWMMAVLPYNP, TILNLTIYIILTTTTFLLLNL, TLLSLGGLPPLTGFLPKWVII, NSLIIPTTMAIITLLNLYFYL, and LPTLITLTTLLLPISPFMLMI.

Belongs to the complex I subunit 2 family. As to quaternary structure, core subunit of respiratory chain NADH dehydrogenase (Complex I) which is composed of 45 different subunits. Interacts with TMEM242.

The protein resides in the mitochondrion inner membrane. The enzyme catalyses a ubiquinone + NADH + 5 H(+)(in) = a ubiquinol + NAD(+) + 4 H(+)(out). Its function is as follows. Core subunit of the mitochondrial membrane respiratory chain NADH dehydrogenase (Complex I) which catalyzes electron transfer from NADH through the respiratory chain, using ubiquinone as an electron acceptor. Essential for the catalytic activity and assembly of complex I. The sequence is that of NADH-ubiquinone oxidoreductase chain 2 from Pan paniscus (Pygmy chimpanzee).